Reading from the N-terminus, the 285-residue chain is MFSTFVPFLIMFREGLEAALIVSLIASYLKRTQRGQWMGAVWVGVVVAAVLCLAIGIFINETTGEFPQKQQELFEGIIAVVAVCILTYMVFWMRKVSKSVKVHLEGAIDNALNSGRGQGWALVAMVFFAVAREGLESVFFLLAAFQQDVGIGAPIGAILGLVCAILVGMAIYWGGVKLHLAKFFKWTSLFILFVAAGLAAGAIRAFHEAGLWNHFQDIAFDLTDVLSTHSLLGTFLEGMFGYQEAPTVSEVSVYFIYLIPALILFFLPPRSTAGSAIAAARKINP.

Topologically, residues 1-4 (MFST) are periplasmic. A helical transmembrane segment spans residues 5 to 25 (FVPFLIMFREGLEAALIVSLI). Residues 26 to 38 (ASYLKRTQRGQWM) lie on the Cytoplasmic side of the membrane. The chain crosses the membrane as a helical span at residues 39–59 (GAVWVGVVVAAVLCLAIGIFI). Residues 60 to 72 (NETTGEFPQKQQE) are Periplasmic-facing. A helical transmembrane segment spans residues 73 to 93 (LFEGIIAVVAVCILTYMVFWM). Topologically, residues 94–121 (RKVSKSVKVHLEGAIDNALNSGRGQGWA) are cytoplasmic. The helical transmembrane segment at 122–142 (LVAMVFFAVAREGLESVFFLL) threads the bilayer. Topologically, residues 143–150 (AAFQQDVG) are periplasmic. Residues 151–171 (IGAPIGAILGLVCAILVGMAI) form a helical membrane-spanning segment. Residues 172-182 (YWGGVKLHLAK) are Cytoplasmic-facing. A helical membrane pass occupies residues 183–203 (FFKWTSLFILFVAAGLAAGAI). The Periplasmic portion of the chain corresponds to 204-247 (RAFHEAGLWNHFQDIAFDLTDVLSTHSLLGTFLEGMFGYQEAPT). A helical transmembrane segment spans residues 248–268 (VSEVSVYFIYLIPALILFFLP). Residues 269–285 (PRSTAGSAIAAARKINP) are Cytoplasmic-facing.

The protein belongs to the oxidase-dependent Fe transporter (OFeT) (TC 9.A.10.1) family. As to quaternary structure, part of a ferrous iron transporter composed of EfeU, EfeO and EfeB.

The protein localises to the cell inner membrane. Uptake of Fe(2+) ions across the membrane. The polypeptide is Ferrous iron permease EfeU (efeU) (Yersinia pseudotuberculosis serotype I (strain IP32953)).